A 437-amino-acid polypeptide reads, in one-letter code: MQVSVENTSALERRMTIAVPAERVENEVNKRLQQTAKRAKIAGFRPGKVPMTVIRQRFEADARQEAFGDLVQASFYEAIVEQKLNPAGAPAVEPKSFEKGKDLEFVAIFEVFPEFTVAGLESIKVERLSAEVADSDLDNMLEVLRKQNTRFEAVERAAQNDDQVNIDFVGKVDGEAFAGGSAKGTLLVLGSGRMIPGFEEGLVGAKAGEERVVNVTFPEDYQNLDLAGKAAEFTITVNSVSAPVLPELNEEFFAQFGIKESTLEGFRAEVRKNMERELRQAIKTKVKNQVMDGLLAANPIEVPKALLENEVNRLRVQAVQQFGGNIKPEQLPVELFEEQAKRRVVLGLIVAEVVKQFELKPDDAKVREMIEEMASAYQEPEQVIAWYYKNDQQLNEVRSVVLEEQVVDTVLQKATVTDKSVSYEEAVKPAEAPAAAE.

Residues 161-246 (DDQVNIDFVG…VNSVSAPVLP (86 aa)) enclose the PPIase FKBP-type domain.

This sequence belongs to the FKBP-type PPIase family. Tig subfamily.

The protein localises to the cytoplasm. It catalyses the reaction [protein]-peptidylproline (omega=180) = [protein]-peptidylproline (omega=0). Involved in protein export. Acts as a chaperone by maintaining the newly synthesized protein in an open conformation. Functions as a peptidyl-prolyl cis-trans isomerase. The polypeptide is Trigger factor (Pseudomonas putida (strain ATCC 47054 / DSM 6125 / CFBP 8728 / NCIMB 11950 / KT2440)).